The sequence spans 528 residues: Probable feruloyl esterase B-1 (528 aa).

A signal peptide spans 1–19 (MMWWFLLIGLASAAATASS). 6 cysteine pairs are disulfide-bonded: cysteine 29-cysteine 78, cysteine 64-cysteine 117, cysteine 190-cysteine 445, cysteine 259-cysteine 276, cysteine 285-cysteine 295, and cysteine 505-cysteine 527. N-linked (GlcNAc...) asparagine glycans are attached at residues asparagine 83 and asparagine 101. Serine 191 acts as the Acyl-ester intermediate in catalysis. 5 residues coordinate Ca(2+): aspartate 260, aspartate 263, alanine 265, aspartate 267, and isoleucine 269. Residues asparagine 286, asparagine 354, and asparagine 385 are each glycosylated (N-linked (GlcNAc...) asparagine). Active-site charge relay system residues include aspartate 404 and histidine 444.

It belongs to the tannase family.

The protein resides in the secreted. The catalysed reaction is feruloyl-polysaccharide + H2O = ferulate + polysaccharide.. Involved in degradation of plant cell walls. Hydrolyzes the feruloyl-arabinose ester bond in arabinoxylans as well as the feruloyl-galactose and feruloyl-arabinose ester bonds in pectin. The polypeptide is Probable feruloyl esterase B-1 (faeB-1) (Aspergillus fumigatus (strain ATCC MYA-4609 / CBS 101355 / FGSC A1100 / Af293) (Neosartorya fumigata)).